A 107-amino-acid chain; its full sequence is Anaphase-promoting complex subunit 14 (107 aa).

As to quaternary structure, the APC/C is composed of at least 13 subunits: apc1, apc2, nuc2, apc4, apc5, cut9, apc8, apc10, apc11, hcn1, apc13, apc14 and apc15.

Its subcellular location is the ascus epiplasm. Component of the anaphase promoting complex/cyclosome (APC/C), a cell cycle-regulated E3 ubiquitin-protein ligase complex that controls progression through mitosis and the G1 phase of the cell cycle. The APC/C is thought to confer substrate specificity and, in the presence of ubiquitin-conjugating E2 enzymes, it catalyzes the formation of protein-ubiquitin conjugates that are subsequently degraded by the 26S proteasome. Appears to play a role in spore wall formation. The protein is Anaphase-promoting complex subunit 14 of Schizosaccharomyces pombe (strain 972 / ATCC 24843) (Fission yeast).